A 386-amino-acid polypeptide reads, in one-letter code: Zinc finger CCCH domain-containing protein 39 (386 aa).

The segment at 1–90 is disordered; the sequence is MDSSYSDSRP…SSSNPWMVPS (90 aa). Over residues 20–37 the composition is skewed to polar residues; that stretch reads WNQTQMIDSMANPMNNEQ. Residues 43 to 58 are compositionally biased toward low complexity; it reads LSESQSQSQPSQQLQP. Polar residues predominate over residues 72–85; sequence NPASSFPQPSSSNP. A C3H1-type 1 zinc finger spans residues 104-131; sequence FYKTRMCAKFRAGTCRNGELCNFAHGIE. Residues 136 to 166 are disordered; it reads PPSNWQEIVGPPPAGQDRERERERERERERP. Basic and acidic residues predominate over residues 151–166; sequence QDRERERERERERERP. 2 consecutive C3H1-type zinc fingers follow at residues 183 to 211 and 269 to 297; these read ILRMKLCRKFCFGEECPYGDRCNFIHEDL and YWKTRLCMKFDITGQCPFGDKCHFAHGQA.

This Arabidopsis thaliana (Mouse-ear cress) protein is Zinc finger CCCH domain-containing protein 39.